We begin with the raw amino-acid sequence, 229 residues long: Potassium/proton antiporter CemA (229 aa).

3 helical membrane-spanning segments follow: residues 6–26 (AFIP…ISLC), 107–127 (ILHF…SFWG), and 189–209 (ILSG…KYWI).

This sequence belongs to the CemA family.

Its subcellular location is the plastid. It localises to the chloroplast inner membrane. It carries out the reaction K(+)(in) + H(+)(out) = K(+)(out) + H(+)(in). Functionally, contributes to K(+)/H(+) antiport activity by supporting proton efflux to control proton extrusion and homeostasis in chloroplasts in a light-dependent manner to modulate photosynthesis. Prevents excessive induction of non-photochemical quenching (NPQ) under continuous-light conditions. Indirectly promotes efficient inorganic carbon uptake into chloroplasts. This chain is Potassium/proton antiporter CemA, found in Lepidium virginicum (Virginia pepperweed).